The primary structure comprises 115 residues: Large ribosomal subunit protein bL19 (115 aa).

This sequence belongs to the bacterial ribosomal protein bL19 family.

This protein is located at the 30S-50S ribosomal subunit interface and may play a role in the structure and function of the aminoacyl-tRNA binding site. The protein is Large ribosomal subunit protein bL19 of Bacillus velezensis (strain DSM 23117 / BGSC 10A6 / LMG 26770 / FZB42) (Bacillus amyloliquefaciens subsp. plantarum).